We begin with the raw amino-acid sequence, 270 residues long: MSGQQSSAVYKIALGIEYDGSKYYGWQRQNEVRSVQEKLEKALSQVANEPINVFCAGRTDAGVHGTGQVVHFETTALRKDAAWTLGVNANLPGDIAVRWVKTVPDDFHARFSATARRYRYIIYNHRLRPAVLAKGVTHYYEPLDAERMHRAAQCLLGENDFTSFRAVQCQSRTPWRNVMHINVTRHGPYVVVDIKANAFVHHMVRNIVGSLLEVGAHNQPESWIAELLAARDRTLAAATAKAEGLYLVAVDYPDRFDLPKPPMGPLFLAD.

Aspartate 60 serves as the catalytic Nucleophile. Residue tyrosine 118 coordinates substrate.

The protein belongs to the tRNA pseudouridine synthase TruA family. As to quaternary structure, homodimer.

It carries out the reaction uridine(38/39/40) in tRNA = pseudouridine(38/39/40) in tRNA. In terms of biological role, formation of pseudouridine at positions 38, 39 and 40 in the anticodon stem and loop of transfer RNAs. The chain is tRNA pseudouridine synthase A from Salmonella typhimurium (strain LT2 / SGSC1412 / ATCC 700720).